A 412-amino-acid polypeptide reads, in one-letter code: Adenosine receptor A2a (412 aa).

The Extracellular segment spans residues 1–7 (MPIMGSS). Residues 8–32 (VYITVELAIAVLAILGNVLVCWAVW) form a helical membrane-spanning segment. At 33-42 (LNSNLQNVTN) the chain is on the cytoplasmic side. Residues 43–66 (YFVVSLAAADIAVGVLAIPFAITI) traverse the membrane as a helical segment. At 67-77 (STGFCAACHGC) the chain is on the extracellular side. 3 cysteine pairs are disulfide-bonded: Cys71–Cys159, Cys74–Cys146, and Cys77–Cys166. The helical transmembrane segment at 78–100 (LFIACFVLVLTQSSIFSLLAIAI) threads the bilayer. At 101-120 (DRYIAIRIPLRYNGLVTGTR) the chain is on the cytoplasmic side. The helical transmembrane segment at 121–143 (AKGIIAICWVLSFAIGLTPMLGW) threads the bilayer. Topologically, residues 144–173 (NNCGQPKEGKNHSQGCGEGQVACLFEDVVP) are extracellular. Asn154 carries N-linked (GlcNAc...) asparagine glycosylation. Residue Glu169 participates in adenosine binding. Residues 174 to 198 (MNYMVYFNFFACVLVPLLLMLGVYL) traverse the membrane as a helical segment. The Cytoplasmic segment spans residues 199 to 234 (RIFLAARRQLKQMESQPLPGERARSTLQKEVHAAKS). The chain crosses the membrane as a helical span at residues 235–258 (LAIIVGLFALCWLPLHIINCFTFF). Asn253 contributes to the adenosine binding site. A disulfide bridge links Cys259 with Cys262. The Extracellular portion of the chain corresponds to 259–266 (CPDCSHAP). A helical membrane pass occupies residues 267–290 (LWLMYLAIVLSHTNSVVNPFIYAY). Residues Ser277 and His278 each contribute to the adenosine site. At 291 to 412 (RIREFRQTFR…PLAQDGAGVS (122 aa)) the chain is on the cytoplasmic side. A disordered region spans residues 391 to 412 (KGVCPEPPGLDDPLAQDGAGVS).

This sequence belongs to the G-protein coupled receptor 1 family. In terms of assembly, interacts (via cytoplasmic C-terminal domain) with USP4; the interaction is direct. May interact with DRD4. Interacts with NECAB2. Interacts (via cytoplasmic C-terminal domain) with GAS2L2; interaction enhances receptor-mediated adenylyl cyclase activity. Post-translationally, ubiquitinated. Deubiquitinated by USP4; leading to stabilization and expression at the cell surface.

The protein resides in the cell membrane. Functionally, receptor for adenosine. The activity of this receptor is mediated by G proteins which activate adenylyl cyclase. The sequence is that of Adenosine receptor A2a (ADORA2A) from Homo sapiens (Human).